A 467-amino-acid chain; its full sequence is Transcription factor bHLH3 (467 aa).

The region spanning 316-365 (EEALNHVEAERQRREKLNQRFYALRAVVPNISKMDKASLLADAITYITDM) is the bHLH domain.

Homodimer.

Its subcellular location is the nucleus. The chain is Transcription factor bHLH3 (BHLH3) from Arabidopsis thaliana (Mouse-ear cress).